We begin with the raw amino-acid sequence, 245 residues long: Orotidine 5'-phosphate decarboxylase (245 aa).

Residues aspartate 22, lysine 44, 71-80 (DLKFHDIPNT), threonine 131, arginine 192, glutamine 201, glycine 221, and arginine 222 each bind substrate. The active-site Proton donor is the lysine 73.

The protein belongs to the OMP decarboxylase family. Type 1 subfamily. In terms of assembly, homodimer.

The enzyme catalyses orotidine 5'-phosphate + H(+) = UMP + CO2. It participates in pyrimidine metabolism; UMP biosynthesis via de novo pathway; UMP from orotate: step 2/2. Functionally, catalyzes the decarboxylation of orotidine 5'-monophosphate (OMP) to uridine 5'-monophosphate (UMP). This is Orotidine 5'-phosphate decarboxylase from Yersinia pseudotuberculosis serotype O:3 (strain YPIII).